The primary structure comprises 154 residues: Myoglobin (154 aa).

Residues 2–148 (GLSDGEWQLV…FRNDIAAKYK (147 aa)) enclose the Globin domain. Ser4 bears the Phosphoserine mark. His65 contacts nitrite. His65 provides a ligand contact to O2. Thr68 is subject to Phosphothreonine. A heme b-binding site is contributed by His94.

It belongs to the globin family. In terms of assembly, monomeric.

It is found in the cytoplasm. The protein resides in the sarcoplasm. It catalyses the reaction Fe(III)-heme b-[protein] + nitric oxide + H2O = Fe(II)-heme b-[protein] + nitrite + 2 H(+). The catalysed reaction is H2O2 + AH2 = A + 2 H2O. Functionally, monomeric heme protein which primary function is to store oxygen and facilitate its diffusion within muscle tissues. Reversibly binds oxygen through a pentacoordinated heme iron and enables its timely and efficient release as needed during periods of heightened demand. Depending on the oxidative conditions of tissues and cells, and in addition to its ability to bind oxygen, it also has a nitrite reductase activity whereby it regulates the production of bioactive nitric oxide. Under stress conditions, like hypoxia and anoxia, it also protects cells against reactive oxygen species thanks to its pseudoperoxidase activity. In Lepilemur mustelinus (Weasel sportive lemur), this protein is Myoglobin (MB).